The primary structure comprises 416 residues: Phosphoglycerate kinase (416 aa).

(2R)-3-phosphoglycerate contacts are provided by valine 23, aspartate 24, phenylalanine 25, asparagine 26, glutamine 38, arginine 39, serine 62, histidine 63, glycine 65, arginine 66, leucine 121, arginine 122, histidine 168, and arginine 169. ADP is bound at residue glycine 212. Glycine 212 serves as a coordination point for CDP. Residues alanine 213 and lysine 214 each coordinate AMP. ATP is bound at residue alanine 213. Alanine 213 provides a ligand contact to Mg(2+). Positions 216 and 217 each coordinate Mg(2+). Aspartate 217 lines the CDP pocket. Lysine 218 lines the AMP pocket. An ATP-binding site is contributed by lysine 218. Residue glycine 236 coordinates ADP. Glycine 236 contributes to the CDP binding site. Residues glycine 237 and glycine 311 each coordinate AMP. Residues glycine 237 and glycine 311 each coordinate ATP. 2 residues coordinate CDP: glycine 336 and phenylalanine 341. Position 341 (phenylalanine 341) interacts with ADP. Glutamate 342 contacts AMP. ATP is bound by residues glutamate 342, aspartate 373, and threonine 374. Aspartate 373 serves as a coordination point for Mg(2+).

The protein belongs to the phosphoglycerate kinase family. Monomer. Requires Mg(2+) as cofactor.

It is found in the cytoplasm. Its subcellular location is the mitochondrion. It carries out the reaction (2R)-3-phosphoglycerate + ATP = (2R)-3-phospho-glyceroyl phosphate + ADP. Its pathway is carbohydrate degradation; glycolysis; pyruvate from D-glyceraldehyde 3-phosphate: step 2/5. Catalyzes one of the two ATP producing reactions in the glycolytic pathway via the reversible conversion of 1,3-diphosphoglycerate to 3-phosphoglycerate. Both L- and D- forms of purine and pyrimidine nucleotides can be used as substrates, but the activity is much lower on pyrimidines. Negatively regulates the biosynthesis of acetyl-CoA from pyruvate in the mitochondrion. In Candida glabrata (strain ATCC 2001 / BCRC 20586 / JCM 3761 / NBRC 0622 / NRRL Y-65 / CBS 138) (Yeast), this protein is Phosphoglycerate kinase (PGK1).